A 2544-amino-acid chain; its full sequence is Highly reducing polyketide synthase pkhB (2544 aa).

In terms of domain architecture, Ketosynthase family 3 (KS3) spans 9–438 (SEPIAIIGMS…GTNAHVILES (430 aa)). Residues Cys182, His317, and His358 each act as for beta-ketoacyl synthase activity in the active site. The malonyl-CoA:ACP transacylase (MAT) domain stretch occupies residues 566–876 (VFTGQVFRRS…PYWGCLVRDE (311 aa)). The N-terminal hotdog fold stretch occupies residues 948 to 1082 (HELLGMPVAG…GMVGIEESAV (135 aa)). Residues 948–1252 (HELLGMPVAG…VELAALGRGS (305 aa)) are dehydratase (DH) domain. The 307-residue stretch at 948–1254 (HELLGMPVAG…LAALGRGSSA (307 aa)) folds into the PKS/mFAS DH domain. The active-site Proton acceptor; for dehydratase activity is His980. The interval 1095–1254 (YTRQPNPQDL…LAALGRGSSA (160 aa)) is C-terminal hotdog fold. The active-site Proton donor; for dehydratase activity is Asp1165. The segment at 1398–1573 (SSLRQLSALL…FSGLDLEIYD (176 aa)) is methyltransferase (CMet) domain. Residues 1826 to 2142 (GHLGTLAFAE…TGDQMGKVVL (317 aa)) form an enoyl reductase (ER) domain region. The interval 2169–2356 (ASYLIVGGVG…GVAIDLGPIS (188 aa)) is ketoreductase (KR) domain. One can recognise a Carrier domain in the interval 2462 to 2539 (EGARLIGAAI…ALAGLVAEKS (78 aa)). Residue Ser2499 is modified to O-(pantetheine 4'-phosphoryl)serine.

It depends on pantetheine 4'-phosphate as a cofactor.

The protein operates within secondary metabolite biosynthesis. In terms of biological role, highly reducing polyketide synthase; part of the pkh gene cluster that mediates the biosynthesis of 2,4-dihydroxy-6-[(3E,5E,7E)-2-oxonona-3,5,7-trienyl]benzaldehyde. The highly reducing polyketide synthase pkhB first produces the (2E,4E,6E)-octa-2,4,6-trienyl strater unit for the non-reducing polyketide synthase pkhA. This octatrienoyl starter is then loaded onto the SAT domain of the NR-PKS pkhA to be condensed with 4 malonyl-CoA units to yield 2,4-dihydroxy-6-[(3E,5E,7E)-2-oxonona-3,5,7-trienyl]benzaldehyde. The chain is Highly reducing polyketide synthase pkhB from Emericella nidulans (strain FGSC A4 / ATCC 38163 / CBS 112.46 / NRRL 194 / M139) (Aspergillus nidulans).